Reading from the N-terminus, the 504-residue chain is ATP synthase subunit alpha 2 (504 aa).

169 to 176 (GDRQTGKT) contributes to the ATP binding site.

This sequence belongs to the ATPase alpha/beta chains family. As to quaternary structure, F-type ATPases have 2 components, CF(1) - the catalytic core - and CF(0) - the membrane proton channel. CF(1) has five subunits: alpha(3), beta(3), gamma(1), delta(1), epsilon(1). CF(0) has three main subunits: a(1), b(2) and c(9-12). The alpha and beta chains form an alternating ring which encloses part of the gamma chain. CF(1) is attached to CF(0) by a central stalk formed by the gamma and epsilon chains, while a peripheral stalk is formed by the delta and b chains.

The protein localises to the cell membrane. The catalysed reaction is ATP + H2O + 4 H(+)(in) = ADP + phosphate + 5 H(+)(out). In terms of biological role, produces ATP from ADP in the presence of a proton gradient across the membrane. The alpha chain is a regulatory subunit. This Listeria monocytogenes serovar 1/2a (strain ATCC BAA-679 / EGD-e) protein is ATP synthase subunit alpha 2.